Here is an 828-residue protein sequence, read N- to C-terminus: Outer membrane usher protein MrkC (828 aa).

The signal sequence occupies residues 1–18 (MKQRSICPGRLSTAIAVA). Cys-813 and Cys-827 are oxidised to a cystine.

Belongs to the fimbrial export usher family.

It is found in the cell outer membrane. Functionally, involved in the export and assembly of the type 3 fimbrial subunit (MrkA). This chain is Outer membrane usher protein MrkC (mrkC), found in Klebsiella pneumoniae.